We begin with the raw amino-acid sequence, 396 residues long: L-lactate dehydrogenase (396 aa).

The FMN hydroxy acid dehydrogenase domain maps to 1 to 380; sequence MIISAASDYR…TQDSLVQGLG (380 aa). Tyrosine 24 is a substrate binding site. FMN is bound by residues serine 106 and glutamine 127. Tyrosine 129 is a substrate binding site. Threonine 155 lines the FMN pocket. Arginine 164 contributes to the substrate binding site. FMN is bound at residue lysine 251. Histidine 275 acts as the Proton acceptor in catalysis. Arginine 278 contacts substrate. 306–330 contacts FMN; sequence DSGIRNGLDVVRMIALGADTVLLGR.

The protein belongs to the FMN-dependent alpha-hydroxy acid dehydrogenase family. It depends on FMN as a cofactor.

The protein localises to the cell inner membrane. The catalysed reaction is (S)-lactate + A = pyruvate + AH2. Functionally, catalyzes the conversion of L-lactate to pyruvate. Is coupled to the respiratory chain. The polypeptide is L-lactate dehydrogenase (Escherichia coli O127:H6 (strain E2348/69 / EPEC)).